The following is a 309-amino-acid chain: HPr kinase/phosphorylase (309 aa).

Catalysis depends on residues H139 and K160. 154–161 (GESGIGKS) contacts ATP. S161 is a binding site for Mg(2+). D178 (proton acceptor; for phosphorylation activity. Proton donor; for dephosphorylation activity) is an active-site residue. The important for the catalytic mechanism of both phosphorylation and dephosphorylation stretch occupies residues 202-211 (IELRGIGIID). Residue E203 coordinates Mg(2+). R244 is a catalytic residue. The tract at residues 265-270 (PIRPGR) is important for the catalytic mechanism of dephosphorylation.

This sequence belongs to the HPrK/P family. As to quaternary structure, homohexamer. Mg(2+) serves as cofactor.

It catalyses the reaction [HPr protein]-L-serine + ATP = [HPr protein]-O-phospho-L-serine + ADP + H(+). The catalysed reaction is [HPr protein]-O-phospho-L-serine + phosphate + H(+) = [HPr protein]-L-serine + diphosphate. Its function is as follows. Catalyzes the ATP- as well as the pyrophosphate-dependent phosphorylation of a specific serine residue in HPr, a phosphocarrier protein of the phosphoenolpyruvate-dependent sugar phosphotransferase system (PTS). HprK/P also catalyzes the pyrophosphate-producing, inorganic phosphate-dependent dephosphorylation (phosphorolysis) of seryl-phosphorylated HPr (P-Ser-HPr). The two antagonistic activities of HprK/P are regulated by several intracellular metabolites, which change their concentration in response to the absence or presence of rapidly metabolisable carbon sources (glucose, fructose, etc.) in the growth medium. Therefore, by controlling the phosphorylation state of HPr, HPrK/P is a sensor enzyme that plays a major role in the regulation of carbon metabolism and sugar transport: it mediates carbon catabolite repression (CCR), and regulates PTS-catalyzed carbohydrate uptake and inducer exclusion. The polypeptide is HPr kinase/phosphorylase (Lachnoclostridium phytofermentans (strain ATCC 700394 / DSM 18823 / ISDg) (Clostridium phytofermentans)).